Reading from the N-terminus, the 389-residue chain is Chorismate synthase (389 aa).

2 residues coordinate NADP(+): Arg40 and Arg46. FMN-binding positions include 131-133 (RSS), 252-253 (NA), Gly297, 312-316 (KPIPT), and Arg338.

It belongs to the chorismate synthase family. Homotetramer. FMNH2 is required as a cofactor.

It catalyses the reaction 5-O-(1-carboxyvinyl)-3-phosphoshikimate = chorismate + phosphate. Its pathway is metabolic intermediate biosynthesis; chorismate biosynthesis; chorismate from D-erythrose 4-phosphate and phosphoenolpyruvate: step 7/7. Its function is as follows. Catalyzes the anti-1,4-elimination of the C-3 phosphate and the C-6 proR hydrogen from 5-enolpyruvylshikimate-3-phosphate (EPSP) to yield chorismate, which is the branch point compound that serves as the starting substrate for the three terminal pathways of aromatic amino acid biosynthesis. This reaction introduces a second double bond into the aromatic ring system. This is Chorismate synthase from Lactiplantibacillus plantarum (strain ATCC BAA-793 / NCIMB 8826 / WCFS1) (Lactobacillus plantarum).